Consider the following 20-residue polypeptide: Maximin-Ht (20 aa).

It belongs to the bombinin family. As to expression, expressed by the skin glands.

The protein localises to the secreted. Has antimicrobial activity. This chain is Maximin-Ht, found in Bombina maxima (Giant fire-bellied toad).